Consider the following 66-residue polypeptide: Phylloseptin-B1 (66 aa).

Positions 1 to 22 (MAFLKKSLFLVLFLGLVSLSIC) are cleaved as a signal peptide. A propeptide spanning residues 23–46 (EEEKRETEEKEYDQGEDDKSEEKR) is cleaved from the precursor. Leu65 is subject to Leucine amide.

The protein belongs to the frog skin active peptide (FSAP) family. Phylloseptin subfamily. In terms of tissue distribution, expressed by the skin glands.

Its subcellular location is the secreted. It is found in the target cell membrane. Functionally, antimicrobial peptide with activity against only a few strains of Gram-positive bacteria (S.aureus and B.megaterium). Acts in a synergistic effect in combination with Plasticin-B1 at doses that are not active alone. In Phyllomedusa bicolor (Two-colored leaf frog), this protein is Phylloseptin-B1.